Reading from the N-terminus, the 362-residue chain is Putative RING-H2 finger protein ATL21B (362 aa).

The signal sequence occupies residues 1 to 23 (MIISKQLFLLFFLLFFIFPLRHA). Residues 234 to 254 (VVAVLICLSIIGAVILFVTCI) traverse the membrane as a helical segment. Residues 316–358 (CPICLSEYVSKETVRFIPECDHCFHAKCIDVWLKIHGSCPLCR) form an RING-type; atypical zinc finger.

This sequence belongs to the RING-type zinc finger family. ATL subfamily.

Its subcellular location is the membrane. The catalysed reaction is S-ubiquitinyl-[E2 ubiquitin-conjugating enzyme]-L-cysteine + [acceptor protein]-L-lysine = [E2 ubiquitin-conjugating enzyme]-L-cysteine + N(6)-ubiquitinyl-[acceptor protein]-L-lysine.. The protein operates within protein modification; protein ubiquitination. The protein is Putative RING-H2 finger protein ATL21B (ATL21B) of Arabidopsis thaliana (Mouse-ear cress).